The following is a 63-amino-acid chain: Large ribosomal subunit protein uL30 (63 aa).

The protein belongs to the universal ribosomal protein uL30 family. As to quaternary structure, part of the 50S ribosomal subunit.

The polypeptide is Large ribosomal subunit protein uL30 (Coxiella burnetii (strain CbuK_Q154) (Coxiella burnetii (strain Q154))).